A 453-amino-acid polypeptide reads, in one-letter code: 3-phosphoshikimate 1-carboxyvinyltransferase (453 aa).

The 3-phosphoshikimate site is built by Lys-28, Ser-29, and Arg-33. Lys-28 lines the phosphoenolpyruvate pocket. Residues Gly-101 and Arg-129 each contribute to the phosphoenolpyruvate site. The 3-phosphoshikimate site is built by Ser-174, Gln-176, Asp-326, and Lys-353. Residue Gln-176 participates in phosphoenolpyruvate binding. Asp-326 (proton acceptor) is an active-site residue. 2 residues coordinate phosphoenolpyruvate: Arg-357 and Arg-405.

The protein belongs to the EPSP synthase family. As to quaternary structure, monomer.

Its subcellular location is the cytoplasm. It catalyses the reaction 3-phosphoshikimate + phosphoenolpyruvate = 5-O-(1-carboxyvinyl)-3-phosphoshikimate + phosphate. The protein operates within metabolic intermediate biosynthesis; chorismate biosynthesis; chorismate from D-erythrose 4-phosphate and phosphoenolpyruvate: step 6/7. Catalyzes the transfer of the enolpyruvyl moiety of phosphoenolpyruvate (PEP) to the 5-hydroxyl of shikimate-3-phosphate (S3P) to produce enolpyruvyl shikimate-3-phosphate and inorganic phosphate. The protein is 3-phosphoshikimate 1-carboxyvinyltransferase of Zymomonas mobilis subsp. mobilis (strain ATCC 31821 / ZM4 / CP4).